Here is a 687-residue protein sequence, read N- to C-terminus: Ferric vulnibactin receptor VuuA (687 aa).

A signal peptide spans 1 to 37 (MAALRPARTSVAEKKTFKLHALSAVVMGLCASGQAYA). In terms of domain architecture, TBDR plug spans 63–185 (TIYDTSSSVQ…SAGAIVMKTN (123 aa)). The TBDR beta-barrel domain maps to 190-687 (HFESAVKAGV…MIGASLQLNF (498 aa)). A TonB C-terminal box motif is present at residues 670 to 687 (EPLKQQPRMIGASLQLNF).

This sequence belongs to the TonB-dependent receptor family.

The protein resides in the cell outer membrane. Functionally, involved in the uptake of iron in complex with vulnibactin, a catecholate siderophore synthesized by V.vulnificus. Binds and transports ferric vulnibactin across the outer membrane. The energy source is provided by the inner membrane TonB system. The sequence is that of Ferric vulnibactin receptor VuuA from Vibrio vulnificus.